The chain runs to 121 residues: Basic phospholipase A2 daboxin P (121 aa).

7 disulfides stabilise this stretch: Cys26–Cys115, Cys28–Cys44, Cys43–Cys95, Cys49–Cys121, Cys50–Cys88, Cys57–Cys81, and Cys75–Cys86. Tyr27, Gly29, and Gly31 together coordinate Ca(2+). Residue His47 is part of the active site. Residue Asp48 coordinates Ca(2+). The active site involves Asp89.

Ca(2+) is required as a cofactor. Expressed by the venom gland.

The protein resides in the secreted. The catalysed reaction is a 1,2-diacyl-sn-glycero-3-phosphocholine + H2O = a 1-acyl-sn-glycero-3-phosphocholine + a fatty acid + H(+). In terms of biological role, snake venom phospholipase A2 (PLA2) that exhibits anticoagulant activity, probably by binding to factor X and its activated form factor Xa (F10). Shows no cytotoxicity. PLA2 catalyzes the calcium-dependent hydrolysis of the 2-acyl groups in 3-sn-phosphoglycerides. In Daboia russelii (Russel's viper), this protein is Basic phospholipase A2 daboxin P.